The primary structure comprises 178 residues: Large ribosomal subunit protein uL6 (178 aa).

It belongs to the universal ribosomal protein uL6 family. As to quaternary structure, part of the 50S ribosomal subunit.

Functionally, this protein binds to the 23S rRNA, and is important in its secondary structure. It is located near the subunit interface in the base of the L7/L12 stalk, and near the tRNA binding site of the peptidyltransferase center. This Exiguobacterium sibiricum (strain DSM 17290 / CCUG 55495 / CIP 109462 / JCM 13490 / 255-15) protein is Large ribosomal subunit protein uL6.